Reading from the N-terminus, the 146-residue chain is Hemoglobin subunit beta (146 aa).

In terms of domain architecture, Globin spans 2 to 146 (FLTPEENGHV…VANALAHKYH (145 aa)). Thr12 is modified (phosphothreonine). Residue Ser44 is modified to Phosphoserine. The residue at position 59 (Lys59) is an N6-acetyllysine. His63 contributes to the heme b binding site. The residue at position 82 (Lys82) is an N6-acetyllysine. His92 serves as a coordination point for heme b. Residue Cys93 is modified to S-nitrosocysteine. Position 144 is an N6-acetyllysine (Lys144).

This sequence belongs to the globin family. As to quaternary structure, heterotetramer of two alpha chains and two beta chains. Red blood cells.

In terms of biological role, involved in oxygen transport from the lung to the various peripheral tissues. This Hapalemur griseus (Gray gentle lemur) protein is Hemoglobin subunit beta (HBB).